Consider the following 143-residue polypeptide: Large ribosomal subunit protein uL13 (143 aa).

This sequence belongs to the universal ribosomal protein uL13 family. Part of the 50S ribosomal subunit.

Its function is as follows. This protein is one of the early assembly proteins of the 50S ribosomal subunit, although it is not seen to bind rRNA by itself. It is important during the early stages of 50S assembly. The polypeptide is Large ribosomal subunit protein uL13 (Solibacter usitatus (strain Ellin6076)).